Here is a 473-residue protein sequence, read N- to C-terminus: Laccase-3 (473 aa).

The first 21 residues, 1–21, serve as a signal peptide directing secretion; that stretch reads MSFSSLRRALVFLGACSSALA. Plastocyanin-like domains follow at residues 23 to 148 and 160 to 298; these read IGPV…LVIY and VDDE…ILRY. A glycan (N-linked (GlcNAc...) asparagine) is linked at N75. Residues H85, H87, H130, and H132 each coordinate Cu cation. Cystine bridges form between C106/C462 and C138/C221. N-linked (GlcNAc...) asparagine glycosylation is found at N226, N283, N309, N346, N350, and N374. Residues 365 to 444 enclose the Plastocyanin-like 3 domain; the sequence is TVPVLLQILN…AGLAIVFAED (80 aa). Cu cation contacts are provided by H410, H413, H415, H426, C427, H428, and H432. N470 carries N-linked (GlcNAc...) asparagine glycosylation.

It belongs to the multicopper oxidase family. Homodimer. The cofactor is Cu cation.

It is found in the secreted. It catalyses the reaction 4 hydroquinone + O2 = 4 benzosemiquinone + 2 H2O. Its function is as follows. Lignin degradation and detoxification of lignin-derived products. This chain is Laccase-3 (LCC3), found in Trametes villosa (White-rot fungus).